The chain runs to 572 residues: Phosphoenolpyruvate-protein phosphotransferase (572 aa).

The active-site Tele-phosphohistidine intermediate is the His-190. Positions 297 and 333 each coordinate phosphoenolpyruvate. Glu-427 and Asp-451 together coordinate Mg(2+). Phosphoenolpyruvate-binding positions include 450 to 451 (ND) and Arg-461. Cys-498 functions as the Proton donor in the catalytic mechanism.

Belongs to the PEP-utilizing enzyme family. Homodimer. Requires Mg(2+) as cofactor.

Its subcellular location is the cytoplasm. It catalyses the reaction L-histidyl-[protein] + phosphoenolpyruvate = N(pros)-phospho-L-histidyl-[protein] + pyruvate. General (non sugar-specific) component of the phosphoenolpyruvate-dependent sugar phosphotransferase system (sugar PTS). This major carbohydrate active-transport system catalyzes the phosphorylation of incoming sugar substrates concomitantly with their translocation across the cell membrane. Enzyme I transfers the phosphoryl group from phosphoenolpyruvate (PEP) to the phosphoryl carrier protein (HPr). In Mycoplasma pneumoniae (strain ATCC 29342 / M129 / Subtype 1) (Mycoplasmoides pneumoniae), this protein is Phosphoenolpyruvate-protein phosphotransferase (ptsI).